A 176-amino-acid polypeptide reads, in one-letter code: Centromere protein R (176 aa).

A Glycyl lysine isopeptide (Lys-Gly) (interchain with G-Cter in SUMO2) cross-link involves residue Lys-8. The residue at position 17 (Ser-17) is a Phosphoserine. The interval 20–50 is DD1; the sequence is PSKIMRKKSITAFSPTTGTYQLSPFSSPRTP. Lys-22 is covalently cross-linked (Glycyl lysine isopeptide (Lys-Gly) (interchain with G-Cter in SUMO2)). The residue at position 28 (Ser-28) is a Phosphoserine. The span at 34 to 48 shows a compositional bias: polar residues; sequence PTTGTYQLSPFSSPR. Positions 34–80 are disordered; that stretch reads PTTGTYQLSPFSSPRTPKEQEHRDGPSNGTRKWSVLSSPARQDSTVK. Basic and acidic residues predominate over residues 49 to 58; sequence TPKEQEHRDG. Residues 60–80 are compositionally biased toward polar residues; sequence SNGTRKWSVLSSPARQDSTVK. Residues 63-66 carry the Nuclear localization signal motif; the sequence is TRKW. Phosphoserine is present on Ser-71. Residues 82-112 are a coiled coil; sequence SDGFMMLLSKIERSSEKTMEIMKNLSSLQAL. An LXXLL motif motif is present at residues 118–122; it reads LEDLL. Positions 171 to 175 match the LXXIL motif motif; that stretch reads LKAIL.

Homodimer; mediated by the coiled coil domain. Interacts with CCNA2 and MTA1. Interacts with NFKB1 NF-kappa-B subunit. Component of the CENPA-CAD complex, composed of CENPI, CENPK, CENPL, CENPO, CENPP, CENPQ, CENPR and CENPS. The CENPA-CAD complex interacts with the CENPA-NAC complex, at least composed of CENPA, CENPC, CENPH, CENPM, CENPN, CENPT and CENPU. Interacts with TASOR.

The protein resides in the nucleus. Its subcellular location is the chromosome. It localises to the centromere. It is found in the kinetochore. Functionally, transcription coregulator that can have both coactivator and corepressor functions. Involved in the coactivation of nuclear receptors for retinoid X (RXRs) and thyroid hormone (TRs) in a ligand-dependent fashion. In contrast, it does not coactivate nuclear receptors for retinoic acid, vitamin D, progesterone receptor, nor glucocorticoid. Acts as a coactivator for estrogen receptor alpha. Acts as a transcriptional corepressor via its interaction with the NFKB1 NF-kappa-B subunit, possibly by interfering with the transactivation domain of NFKB1. Induces apoptosis in breast cancer cells, but not in other cancer cells, via a caspase-2 mediated pathway that involves mitochondrial membrane permeabilization but does not require other caspases. May also act as an inhibitor of cyclin A-associated kinase. Also acts a component of the CENPA-CAD (nucleosome distal) complex, a complex recruited to centromeres which is involved in assembly of kinetochore proteins, mitotic progression and chromosome segregation. May be involved in incorporation of newly synthesized CENPA into centromeres via its interaction with the CENPA-NAC complex. In Rattus norvegicus (Rat), this protein is Centromere protein R (Itgb3bp).